A 438-amino-acid chain; its full sequence is GTPase Obg (438 aa).

Residues 6-164 (AEFVDRVKIF…RWLELELKIL (159 aa)) enclose the Obg domain. Residues 165-335 (ADVGLVGYPN…LLDRVASIVR (171 aa)) form the OBG-type G domain. Residues 171–178 (GYPNVGKS), 196–200 (FTTLV), 217–220 (DIPG), 287–290 (NKID), and 316–318 (SAV) contribute to the GTP site. The Mg(2+) site is built by Ser178 and Thr198. Residues 358–438 (VWRKLPERFE…IGNFEFEYRE (81 aa)) enclose the OCT domain.

This sequence belongs to the TRAFAC class OBG-HflX-like GTPase superfamily. OBG GTPase family. As to quaternary structure, monomer. Requires Mg(2+) as cofactor.

The protein localises to the cytoplasm. Functionally, an essential GTPase which binds GTP, GDP and possibly (p)ppGpp with moderate affinity, with high nucleotide exchange rates and a fairly low GTP hydrolysis rate. Plays a role in control of the cell cycle, stress response, ribosome biogenesis and in those bacteria that undergo differentiation, in morphogenesis control. In Thermotoga neapolitana (strain ATCC 49049 / DSM 4359 / NBRC 107923 / NS-E), this protein is GTPase Obg.